The following is an 83-amino-acid chain: Cytochrome b559 subunit alpha (83 aa).

Residues 21–35 (VIHSITIPSLFIAGW) form a helical membrane-spanning segment. His23 serves as a coordination point for heme.

This sequence belongs to the PsbE/PsbF family. Heterodimer of an alpha subunit and a beta subunit. PSII is composed of 1 copy each of membrane proteins PsbA, PsbB, PsbC, PsbD, PsbE, PsbF, PsbH, PsbI, PsbJ, PsbK, PsbL, PsbM, PsbT, PsbX, PsbY, PsbZ, Psb30/Ycf12, at least 3 peripheral proteins of the oxygen-evolving complex and a large number of cofactors. It forms dimeric complexes. Heme b serves as cofactor.

The protein resides in the plastid. The protein localises to the chloroplast thylakoid membrane. Functionally, this b-type cytochrome is tightly associated with the reaction center of photosystem II (PSII). PSII is a light-driven water:plastoquinone oxidoreductase that uses light energy to abstract electrons from H(2)O, generating O(2) and a proton gradient subsequently used for ATP formation. It consists of a core antenna complex that captures photons, and an electron transfer chain that converts photonic excitation into a charge separation. This is Cytochrome b559 subunit alpha from Liriodendron tulipifera (Tuliptree).